The primary structure comprises 238 residues: ATP-dependent Clp protease proteolytic subunit 4 (238 aa).

Catalysis depends on serine 113, which acts as the Nucleophile. The active site involves histidine 138.

The protein belongs to the peptidase S14 family. Fourteen ClpP subunits assemble into 2 heptameric rings which stack back to back to give a disk-like structure with a central cavity, resembling the structure of eukaryotic proteasomes.

It is found in the cytoplasm. The enzyme catalyses Hydrolysis of proteins to small peptides in the presence of ATP and magnesium. alpha-casein is the usual test substrate. In the absence of ATP, only oligopeptides shorter than five residues are hydrolyzed (such as succinyl-Leu-Tyr-|-NHMec, and Leu-Tyr-Leu-|-Tyr-Trp, in which cleavage of the -Tyr-|-Leu- and -Tyr-|-Trp bonds also occurs).. Functionally, cleaves peptides in various proteins in a process that requires ATP hydrolysis. Has a chymotrypsin-like activity. Plays a major role in the degradation of misfolded proteins. The chain is ATP-dependent Clp protease proteolytic subunit 4 from Frankia casuarinae (strain DSM 45818 / CECT 9043 / HFP020203 / CcI3).